A 1350-amino-acid chain; its full sequence is Protein transport protein SEC16A homolog (1350 aa).

5 disordered regions span residues 26 to 45 (YTPTASSSAKELKFDDGSDS), 73 to 97 (LGNDVANEGTSGSVGKEEPSSSIAP), 964 to 1063 (MPPP…TRKV), 1118 to 1216 (AEEA…KPPI), and 1235 to 1350 (QVME…EVEL). Residues 35–45 (KELKFDDGSDS) are compositionally biased toward basic and acidic residues. Ser43 bears the Phosphoserine mark. The segment covering 970 to 1002 (HSTTGNPQVNEYQHQQQEAAKLSYSQSANTMSS) has biased composition (polar residues). Residues 1150-1168 (SPSSGSWSSGSPTPSENSP) are compositionally biased toward low complexity. 2 stretches are compositionally biased toward polar residues: residues 1195–1210 (TYNQGSSSMYQSPPVQ) and 1289–1316 (RSGSGTSLNGDLPQSVSRRTASWSGSVN). Positions 1317-1343 (SSSFMSPTSASTFRPSPLNSSSSSLGE) are enriched in low complexity.

Belongs to the SEC16 family. As to quaternary structure, interacts with SEC13A, SEC13B and SEC31A.

It localises to the golgi apparatus. The protein resides in the golgi stack. It is found in the endoplasmic reticulum. Required for efficient protein export from the endoplasmic reticulum (ER) to the Golgi by regulating COPII coat dynamics at the ER. Functions as a scaffold and regulator of COPII coat assembly at ER exit sites. The polypeptide is Protein transport protein SEC16A homolog (Arabidopsis thaliana (Mouse-ear cress)).